The following is a 255-amino-acid chain: uncharacterized protein (255 aa).

The first 23 residues, 1-23 (MKRLNTLVLYISFLILIISIVAG), serve as a signal peptide directing secretion. Residue cysteine 24 is the site of N-palmitoyl cysteine attachment. A lipid anchor (S-diacylglycerol cysteine) is attached at cysteine 24.

The protein belongs to the staphylococcal tandem lipoprotein family.

The protein localises to the cell membrane. This is an uncharacterized protein from Staphylococcus aureus (strain N315).